Here is a 210-residue protein sequence, read N- to C-terminus: Small ribosomal subunit protein uS3 (210 aa).

In terms of domain architecture, KH type-2 spans 38–106 (IRQFLKKRLY…EVFININEVR (69 aa)).

It belongs to the universal ribosomal protein uS3 family. In terms of assembly, part of the 30S ribosomal subunit. Forms a tight complex with proteins S10 and S14.

Functionally, binds the lower part of the 30S subunit head. Binds mRNA in the 70S ribosome, positioning it for translation. The chain is Small ribosomal subunit protein uS3 from Trichlorobacter lovleyi (strain ATCC BAA-1151 / DSM 17278 / SZ) (Geobacter lovleyi).